The following is a 196-amino-acid chain: Small ribosomal subunit protein uS4c (196 aa).

The S4 RNA-binding domain occupies 82–143 (MRLDNILFRL…KQKSKALIQN (62 aa)).

Belongs to the universal ribosomal protein uS4 family. As to quaternary structure, part of the 30S ribosomal subunit. Contacts protein S5. The interaction surface between S4 and S5 is involved in control of translational fidelity.

The protein localises to the plastid. It is found in the chloroplast. In terms of biological role, one of the primary rRNA binding proteins, it binds directly to 16S rRNA where it nucleates assembly of the body of the 30S subunit. Its function is as follows. With S5 and S12 plays an important role in translational accuracy. This is Small ribosomal subunit protein uS4c (rps4) from Patersonia sp. (strain Lejeune 1997).